Reading from the N-terminus, the 488-residue chain is Glutamate--tRNA ligase (488 aa).

The short motif at 9 to 19 (PSPTGFLHIGG) is the 'HIGH' region element. Residues cysteine 112, cysteine 114, cysteine 139, and histidine 141 each contribute to the Zn(2+) site. Positions 256–260 (KLSKR) match the 'KMSKS' region motif. Lysine 259 provides a ligand contact to ATP.

It belongs to the class-I aminoacyl-tRNA synthetase family. Glutamate--tRNA ligase type 1 subfamily. As to quaternary structure, monomer. Zn(2+) serves as cofactor.

Its subcellular location is the cytoplasm. It carries out the reaction tRNA(Glu) + L-glutamate + ATP = L-glutamyl-tRNA(Glu) + AMP + diphosphate. In terms of biological role, catalyzes the attachment of glutamate to tRNA(Glu) in a two-step reaction: glutamate is first activated by ATP to form Glu-AMP and then transferred to the acceptor end of tRNA(Glu). The polypeptide is Glutamate--tRNA ligase (Elusimicrobium minutum (strain Pei191)).